The primary structure comprises 309 residues: ATP synthase gamma chain (309 aa).

This sequence belongs to the ATPase gamma chain family. As to quaternary structure, F-type ATPases have 2 components, CF(1) - the catalytic core - and CF(0) - the membrane proton channel. CF(1) has five subunits: alpha(3), beta(3), gamma(1), delta(1), epsilon(1). CF(0) has three main subunits: a, b and c.

It is found in the cell membrane. In terms of biological role, produces ATP from ADP in the presence of a proton gradient across the membrane. The gamma chain is believed to be important in regulating ATPase activity and the flow of protons through the CF(0) complex. The polypeptide is ATP synthase gamma chain (Mycobacterium sp. (strain JLS)).